The primary structure comprises 171 residues: Neuronal vesicle trafficking-associated protein 2 (171 aa).

Residues 1-21 form a disordered region; it reads MVKLNSNPSEKGAKPPSVEDG. At 1-71 the chain is on the cytoplasmic side; the sequence is MVKLNSNPSE…FRVPKIAEFT (71 aa). Residues 72 to 92 form a helical; Signal-anchor for type II membrane protein membrane-spanning segment; it reads VTILVSLALAFLACIVFLVVY. Residues 93-171 lie on the Lumenal side of the membrane; sequence KAFTYDHSCP…EPKPPKTQGH (79 aa).

This sequence belongs to the NSG family.

Its subcellular location is the membrane. It is found in the golgi apparatus. The protein resides in the trans-Golgi network membrane. The protein localises to the cell projection. It localises to the dendrite. Its subcellular location is the endosome membrane. It is found in the early endosome membrane. The protein resides in the late endosome membrane. The protein localises to the lysosome lumen. It localises to the cytoplasmic vesicle membrane. Its subcellular location is the golgi stack membrane. It is found in the endosome. The protein resides in the multivesicular body membrane. This Bos taurus (Bovine) protein is Neuronal vesicle trafficking-associated protein 2.